Here is a 185-residue protein sequence, read N- to C-terminus: Ribosome-recycling factor (185 aa).

The protein belongs to the RRF family.

Its subcellular location is the cytoplasm. Functionally, responsible for the release of ribosomes from messenger RNA at the termination of protein biosynthesis. May increase the efficiency of translation by recycling ribosomes from one round of translation to another. The sequence is that of Ribosome-recycling factor from Shewanella frigidimarina (strain NCIMB 400).